Consider the following 37-residue polypeptide: Desulforedoxin (37 aa).

Residues C10, C13, C29, and C30 each contribute to the Fe cation site.

This sequence to the N-terminal section of desulfoferrodoxin. As to quaternary structure, homodimer. The cofactor is Fe cation.

Functionally, nonheme iron protein possibly involved in electron transport. The protein is Desulforedoxin (dsr) of Megalodesulfovibrio gigas (Desulfovibrio gigas).